The following is a 139-amino-acid chain: uncharacterized protein (139 aa).

This is an uncharacterized protein from Encephalitozoon cuniculi (strain GB-M1) (Microsporidian parasite).